The chain runs to 154 residues: Cyclin-dependent protein kinase inhibitor SMR14 (154 aa).

Residues 1 to 111 (MSKIKIFHLF…RPPRKPKAIP (111 aa)) form a disordered region. The span at 24-37 (SLLVPSKSDSLDSS) shows a compositional bias: low complexity. A compositionally biased stretch (basic and acidic residues) spans 74 to 83 (KWECKDEESP).

Probable cyclin-dependent protein kinase (CDK) inhibitor that functions as a repressor of mitosis in the endoreduplication cell cycle. The chain is Cyclin-dependent protein kinase inhibitor SMR14 from Arabidopsis thaliana (Mouse-ear cress).